A 465-amino-acid chain; its full sequence is Eukaryotic translation initiation factor 3 subunit M (465 aa).

Positions 215–383 constitute a PCI domain; that stretch reads EEMSYNHVIL…GEFLVHRATY (169 aa). The disordered stretch occupies residues 429–465; it reads AAAESGREGGARGGAGERRRGGGGHQGPREVDLVGGD. 2 stretches are compositionally biased toward basic and acidic residues: residues 433–448 and 455–465; these read SGRE…ERRR and GPREVDLVGGD.

It belongs to the eIF-3 subunit M family. Component of the eukaryotic translation initiation factor 3 (eIF-3) complex.

The protein localises to the cytoplasm. Component of the eukaryotic translation initiation factor 3 (eIF-3) complex, which is involved in protein synthesis of a specialized repertoire of mRNAs and, together with other initiation factors, stimulates binding of mRNA and methionyl-tRNAi to the 40S ribosome. The eIF-3 complex specifically targets and initiates translation of a subset of mRNAs involved in cell proliferation. The sequence is that of Eukaryotic translation initiation factor 3 subunit M from Coccidioides immitis (strain RS) (Valley fever fungus).